A 285-amino-acid chain; its full sequence is MAQSRLFFSADKAEAERTYNILEQAFEDDGFPIAITEIDEDRQIFEVSVYVEDDAEEVAARVDALVGPGLFDTEELPDIDWVTHSLEGLKPVRAGHFFVHGSHDRDKIEPGDIAIEIDAGLAFGTGHHGTTAGCLELIEETVETEHPTNALDLGTGSAVLAIAIARLAPIPILATDIDPIAVTVAAENAAKNGVAEHIVTATAEGFGHPIFRSYSPFDLIVANILANPLIELAPSIKEHLAPGGSIILSGILDSQHDAVLAAYQTQGLTHQKTLHREGWVAIHLK.

4 residues coordinate S-adenosyl-L-methionine: T131, G154, D176, and N223.

It belongs to the methyltransferase superfamily. PrmA family.

It localises to the cytoplasm. The enzyme catalyses L-lysyl-[protein] + 3 S-adenosyl-L-methionine = N(6),N(6),N(6)-trimethyl-L-lysyl-[protein] + 3 S-adenosyl-L-homocysteine + 3 H(+). Its function is as follows. Methylates ribosomal protein L11. The chain is Ribosomal protein L11 methyltransferase from Brucella melitensis biotype 2 (strain ATCC 23457).